The chain runs to 603 residues: Serine palmitoyltransferase 2 (603 aa).

Residues 90-107 (YYYVVATYLTYLVLIIIG) traverse the membrane as a helical segment. K398 carries the N6-(pyridoxal phosphate)lysine modification.

Belongs to the class-II pyridoxal-phosphate-dependent aminotransferase family. In terms of assembly, lcb1 and lcb2 encode essential subunits of the enzyme and form a heterodimer. Pyridoxal 5'-phosphate is required as a cofactor.

The protein localises to the cytoplasm. Its subcellular location is the endoplasmic reticulum. It is found in the membrane. The enzyme catalyses L-serine + hexadecanoyl-CoA + H(+) = 3-oxosphinganine + CO2 + CoA. The protein operates within lipid metabolism; sphingolipid metabolism. Its function is as follows. Catalytic subunit of serine palmitoyltransferase (SPT), which catalyzes the committed step in the synthesis of sphingolipids, the condensation of serine with palmitoyl CoA to form the long chain base 3-ketosphinganine. This is Serine palmitoyltransferase 2 (lcb2) from Schizosaccharomyces pombe (strain 972 / ATCC 24843) (Fission yeast).